Reading from the N-terminus, the 142-residue chain is Large ribosomal subunit protein uL11 (142 aa).

The protein belongs to the universal ribosomal protein uL11 family. In terms of assembly, part of the ribosomal stalk of the 50S ribosomal subunit. Interacts with L10 and the large rRNA to form the base of the stalk. L10 forms an elongated spine to which L12 dimers bind in a sequential fashion forming a multimeric L10(L12)X complex. In terms of processing, one or more lysine residues are methylated.

Functionally, forms part of the ribosomal stalk which helps the ribosome interact with GTP-bound translation factors. The polypeptide is Large ribosomal subunit protein uL11 (Magnetococcus marinus (strain ATCC BAA-1437 / JCM 17883 / MC-1)).